We begin with the raw amino-acid sequence, 799 residues long: Rho GTPase-activating protein gacI (799 aa).

In terms of domain architecture, Rho-GAP spans 226–451 (IKLEEVFARE…LLVEHVLTIF (226 aa)). A compositionally biased stretch (polar residues) spans 472–520 (RSQSDISSQTKPLPSLPTSPQNRSAIITGDSSSPSLNTPPVKSSLNSSD). Disordered regions lie at residues 472–572 (RSQS…PTSN) and 741–799 (EKQQ…LSNQ). Residues 525–549 (DNGSNNNNNNNTTNTITNNGIADTA) are compositionally biased toward low complexity. Residues 550 to 568 (TPPPPTTPTAPTTPPPPTT) are compositionally biased toward pro residues. Low complexity-rich tracts occupy residues 743–752 (QQQQQQQQTN) and 759–791 (ISSN…LNSS).

It is found in the cytoplasm. Functionally, rho GTPase-activating protein involved in the signal transduction pathway. This Dictyostelium discoideum (Social amoeba) protein is Rho GTPase-activating protein gacI (gacI).